Here is a 539-residue protein sequence, read N- to C-terminus: Phosphoenolpyruvate carboxykinase (ATP) (539 aa).

Residues R64, Y206, and K212 each coordinate substrate. ATP is bound by residues K212, H231, and 247–255; that span reads GLSGTGKTT. Residues K212 and H231 each coordinate Mn(2+). D268 is a Mn(2+) binding site. ATP contacts are provided by residues E296, R332, 448 to 449, and T454; that span reads RI. R332 contributes to the substrate binding site.

Belongs to the phosphoenolpyruvate carboxykinase (ATP) family. As to quaternary structure, monomer. It depends on Mn(2+) as a cofactor.

Its subcellular location is the cytoplasm. The enzyme catalyses oxaloacetate + ATP = phosphoenolpyruvate + ADP + CO2. Its pathway is carbohydrate biosynthesis; gluconeogenesis. Functionally, involved in the gluconeogenesis. Catalyzes the conversion of oxaloacetate (OAA) to phosphoenolpyruvate (PEP) through direct phosphoryl transfer between the nucleoside triphosphate and OAA. In Salmonella agona (strain SL483), this protein is Phosphoenolpyruvate carboxykinase (ATP).